We begin with the raw amino-acid sequence, 342 residues long: GTPase Obg (342 aa).

One can recognise an Obg domain in the interval 1–159 (MKFLDEAKVY…HWLWLRLKLI (159 aa)). An OBG-type G domain is found at 160-327 (ADAGLVGLPN…ALRALMAAMD (168 aa)). GTP is bound by residues 166–173 (GLPNAGKS), 191–195 (FTTLH), 212–215 (DIPG), 279–282 (SKAD), and 308–310 (SAA). Residues S173 and T193 each coordinate Mg(2+).

The protein belongs to the TRAFAC class OBG-HflX-like GTPase superfamily. OBG GTPase family. Monomer. Mg(2+) is required as a cofactor.

The protein localises to the cytoplasm. Functionally, an essential GTPase which binds GTP, GDP and possibly (p)ppGpp with moderate affinity, with high nucleotide exchange rates and a fairly low GTP hydrolysis rate. Plays a role in control of the cell cycle, stress response, ribosome biogenesis and in those bacteria that undergo differentiation, in morphogenesis control. The protein is GTPase Obg of Methylobacterium nodulans (strain LMG 21967 / CNCM I-2342 / ORS 2060).